The following is a 159-amino-acid chain: MRITIIAVGKIKEKYLKEGINEYSKRLSRYCKLEIIEVEDEHAPDNLSSLEEQQVKKREAERVVKRLKEGTLLVVLDVRGSKMSSEELARKLESFFISGKSHVTFVIGGSLGIDKELLNMADFSLSLSDMTFPHQLTRLILLEQLYRSFKIINGEPYHR.

S-adenosyl-L-methionine-binding positions include Leu-76, Gly-108, and 127–132; that span reads LSDMTF.

It belongs to the RNA methyltransferase RlmH family. As to quaternary structure, homodimer.

It localises to the cytoplasm. The catalysed reaction is pseudouridine(1915) in 23S rRNA + S-adenosyl-L-methionine = N(3)-methylpseudouridine(1915) in 23S rRNA + S-adenosyl-L-homocysteine + H(+). Specifically methylates the pseudouridine at position 1915 (m3Psi1915) in 23S rRNA. The sequence is that of Ribosomal RNA large subunit methyltransferase H from Acetivibrio thermocellus (strain ATCC 27405 / DSM 1237 / JCM 9322 / NBRC 103400 / NCIMB 10682 / NRRL B-4536 / VPI 7372) (Clostridium thermocellum).